A 1059-amino-acid polypeptide reads, in one-letter code: Protein cappuccino (1059 aa).

Polar residues-rich tracts occupy residues Ala62–Gly80 and Ala90–Ser123. Disordered regions lie at residues Ala62–Thr146 and Gln448–Pro647. Pro residues predominate over residues Leu133–Phe142. Basic and acidic residues predominate over residues Ser468–His481. The FH1 domain occupies Pro480–Ser560. The segment covering Val483–Pro541 has biased composition (pro residues). In terms of domain architecture, FH2 spans Arg585–Ser1032. Over residues Thr620–Ser629 the composition is skewed to polar residues. The tract at residues Lys1049–Asn1059 is important for interaction with spir.

Belongs to the formin homology family. Cappuccino subfamily. As to quaternary structure, interacts with wash. Interacts with spir.

It localises to the cytoplasm. The protein resides in the cytoskeleton. Its subcellular location is the cytosol. The protein localises to the membrane. It is found in the cytoplasmic vesicle membrane. In terms of biological role, acts as an actin nucleation factor and promotes assembly of actin filaments together with spir. May play a role in intracellular vesicle transport along actin fibers, providing a novel link between actin cytoskeleton dynamics and intracellular transport. In Drosophila melanogaster (Fruit fly), this protein is Protein cappuccino (capu).